The following is a 100-amino-acid chain: NADH-quinone oxidoreductase subunit K (100 aa).

Transmembrane regions (helical) follow at residues 4–24 (LQHGLILAAILFVLGLTGLII), 29–49 (LFMLIGLEVMINAAALAFVVV), and 60–80 (VMFILAISLAAAEASIGLALL).

The protein belongs to the complex I subunit 4L family. NDH-1 is composed of 13 different subunits. Subunits NuoA, H, J, K, L, M, N constitute the membrane sector of the complex.

The protein localises to the cell inner membrane. The catalysed reaction is a quinone + NADH + 5 H(+)(in) = a quinol + NAD(+) + 4 H(+)(out). Its function is as follows. NDH-1 shuttles electrons from NADH, via FMN and iron-sulfur (Fe-S) centers, to quinones in the respiratory chain. The immediate electron acceptor for the enzyme in this species is believed to be ubiquinone. Couples the redox reaction to proton translocation (for every two electrons transferred, four hydrogen ions are translocated across the cytoplasmic membrane), and thus conserves the redox energy in a proton gradient. The chain is NADH-quinone oxidoreductase subunit K from Photorhabdus laumondii subsp. laumondii (strain DSM 15139 / CIP 105565 / TT01) (Photorhabdus luminescens subsp. laumondii).